We begin with the raw amino-acid sequence, 144 residues long: Granulocyte-macrophage colony-stimulating factor (144 aa).

An N-terminal signal peptide occupies residues 1 to 17; the sequence is MWLQGLLLLGTVACSIS. An O-linked (GalNAc...) serine glycan is attached at S24. T27 carries O-linked (GalNAc...) threonine glycosylation. N-linked (GlcNAc...) asparagine glycans are attached at residues N44 and N54. 2 cysteine pairs are disulfide-bonded: C71–C113 and C105–C138.

The protein belongs to the GM-CSF family. In terms of assembly, monomer. The signaling GM-CSF receptor complex is a dodecamer of two head-to-head hexamers of two alpha, two beta, and two ligand subunits.

It localises to the secreted. In terms of biological role, cytokine that stimulates the growth and differentiation of hematopoietic precursor cells from various lineages, including granulocytes, macrophages, eosinophils and erythrocytes. The polypeptide is Granulocyte-macrophage colony-stimulating factor (CSF2) (Chlorocebus aethiops (Green monkey)).